The following is a 227-amino-acid chain: Translation initiation factor 6 (227 aa).

Belongs to the eIF-6 family.

Binds to the 50S ribosomal subunit and prevents its association with the 30S ribosomal subunit to form the 70S initiation complex. This chain is Translation initiation factor 6, found in Methanococcus vannielii (strain ATCC 35089 / DSM 1224 / JCM 13029 / OCM 148 / SB).